Consider the following 291-residue polypeptide: MEMO1 family protein TK1477 (291 aa).

This sequence belongs to the MEMO1 family.

The sequence is that of MEMO1 family protein TK1477 from Thermococcus kodakarensis (strain ATCC BAA-918 / JCM 12380 / KOD1) (Pyrococcus kodakaraensis (strain KOD1)).